The primary structure comprises 289 residues: Diaminopimelate epimerase (289 aa).

Residues Asn-17, Gln-47, and Asn-67 each coordinate substrate. Cys-76 acts as the Proton donor in catalysis. Substrate-binding positions include 77–78 (GN), Asn-164, Asn-198, and 216–217 (ER). The Proton acceptor role is filled by Cys-225. A substrate-binding site is contributed by 226 to 227 (GS).

The protein belongs to the diaminopimelate epimerase family. As to quaternary structure, homodimer.

The protein localises to the cytoplasm. The enzyme catalyses (2S,6S)-2,6-diaminopimelate = meso-2,6-diaminopimelate. It participates in amino-acid biosynthesis; L-lysine biosynthesis via DAP pathway; DL-2,6-diaminopimelate from LL-2,6-diaminopimelate: step 1/1. Its function is as follows. Catalyzes the stereoinversion of LL-2,6-diaminopimelate (L,L-DAP) to meso-diaminopimelate (meso-DAP), a precursor of L-lysine and an essential component of the bacterial peptidoglycan. This chain is Diaminopimelate epimerase, found in Bradyrhizobium sp. (strain BTAi1 / ATCC BAA-1182).